We begin with the raw amino-acid sequence, 651 residues long: Beta-glucuronidase (651 aa).

Positions 1 to 22 (MARGSAVAWAALGPLLWGCALG) are cleaved as a signal peptide. Residues N173, N272, and N420 are each glycosylated (N-linked (GlcNAc...) asparagine). Residue E451 is the Proton donor of the active site. N631 is a glycosylation site (N-linked (GlcNAc...) asparagine).

This sequence belongs to the glycosyl hydrolase 2 family. As to quaternary structure, homotetramer. In terms of processing, N-linked glycosylated with 3 to 4 oligosaccharide chains.

The protein localises to the lysosome. The enzyme catalyses a beta-D-glucuronoside + H2O = D-glucuronate + an alcohol. Inhibited by L-aspartic acid. In terms of biological role, plays an important role in the degradation of dermatan and keratan sulfates. The sequence is that of Beta-glucuronidase (GUSB) from Homo sapiens (Human).